Here is a 458-residue protein sequence, read N- to C-terminus: Argininosuccinate lyase (458 aa).

Belongs to the lyase 1 family. Argininosuccinate lyase subfamily.

It localises to the cytoplasm. The enzyme catalyses 2-(N(omega)-L-arginino)succinate = fumarate + L-arginine. It participates in amino-acid biosynthesis; L-arginine biosynthesis; L-arginine from L-ornithine and carbamoyl phosphate: step 3/3. In Neisseria gonorrhoeae (strain ATCC 700825 / FA 1090), this protein is Argininosuccinate lyase.